Reading from the N-terminus, the 311-residue chain is Ribosomal RNA small subunit methyltransferase H (311 aa).

Residues 32–34, Asp52, Phe79, Asp100, and Gln107 each bind S-adenosyl-L-methionine; that span reads AGH.

The protein belongs to the methyltransferase superfamily. RsmH family.

It localises to the cytoplasm. It catalyses the reaction cytidine(1402) in 16S rRNA + S-adenosyl-L-methionine = N(4)-methylcytidine(1402) in 16S rRNA + S-adenosyl-L-homocysteine + H(+). Its function is as follows. Specifically methylates the N4 position of cytidine in position 1402 (C1402) of 16S rRNA. This is Ribosomal RNA small subunit methyltransferase H from Staphylococcus carnosus (strain TM300).